The following is a 156-amino-acid chain: MPRKGHVERREVLPDPVYNSKKVSKLINKVMWDGKKSLAQKICYGAFDIIREKTGRDPLEVFEEALNNVMPVLEVRPRRVGGATYQVPMEVRPERRLSLGIRWLVEYARQRSGKSMMEKLAAEIIDAANNTGGSVKKKEDTHKMAEANKAFAHYRW.

The protein belongs to the universal ribosomal protein uS7 family. In terms of assembly, part of the 30S ribosomal subunit. Contacts proteins S9 and S11.

Its function is as follows. One of the primary rRNA binding proteins, it binds directly to 16S rRNA where it nucleates assembly of the head domain of the 30S subunit. Is located at the subunit interface close to the decoding center, probably blocks exit of the E-site tRNA. The polypeptide is Small ribosomal subunit protein uS7 (Thermoanaerobacter sp. (strain X514)).